The following is a 260-amino-acid chain: Adenosylcobinamide-GDP ribazoletransferase (260 aa).

Helical transmembrane passes span 40–60, 64–84, 117–137, 142–162, 188–208, and 209–229; these read AFPFAGIVIGFIPALALLLLL, ADPLMAALIALSIQVLVTGAL, YGAIALILSLAIRAAALAVIA, PLTAALAIPAVAALSRGAIAW, QFALASAGLVAALLIWPAFGL, and RPLVASLLATGIAGFAFTAFI.

This sequence belongs to the CobS family. It depends on Mg(2+) as a cofactor.

Its subcellular location is the cell inner membrane. It carries out the reaction alpha-ribazole + adenosylcob(III)inamide-GDP = adenosylcob(III)alamin + GMP + H(+). The enzyme catalyses alpha-ribazole 5'-phosphate + adenosylcob(III)inamide-GDP = adenosylcob(III)alamin 5'-phosphate + GMP + H(+). It participates in cofactor biosynthesis; adenosylcobalamin biosynthesis; adenosylcobalamin from cob(II)yrinate a,c-diamide: step 7/7. Its function is as follows. Joins adenosylcobinamide-GDP and alpha-ribazole to generate adenosylcobalamin (Ado-cobalamin). Also synthesizes adenosylcobalamin 5'-phosphate from adenosylcobinamide-GDP and alpha-ribazole 5'-phosphate. This chain is Adenosylcobinamide-GDP ribazoletransferase, found in Rhizobium johnstonii (strain DSM 114642 / LMG 32736 / 3841) (Rhizobium leguminosarum bv. viciae).